Here is a 64-residue protein sequence, read N- to C-terminus: DNA gyrase inhibitor YacG (64 aa).

Positions 7, 10, 26, and 30 each coordinate Zn(2+). Positions 44-64 (SIPGEPVVIANDDYNNEESDY) are disordered.

The protein belongs to the DNA gyrase inhibitor YacG family. In terms of assembly, interacts with GyrB. The cofactor is Zn(2+).

In terms of biological role, inhibits all the catalytic activities of DNA gyrase by preventing its interaction with DNA. Acts by binding directly to the C-terminal domain of GyrB, which probably disrupts DNA binding by the gyrase. The protein is DNA gyrase inhibitor YacG of Idiomarina loihiensis (strain ATCC BAA-735 / DSM 15497 / L2-TR).